The following is a 199-amino-acid chain: Protein P1 (199 aa).

This Rice tungro bacilliform virus (isolate Philippines) (RTBV) protein is Protein P1.